Consider the following 152-residue polypeptide: Transcriptional regulator MraZ (152 aa).

SpoVT-AbrB domains follow at residues 5–52 (ATMV…TLPA) and 81–124 (ASEC…DEQT).

This sequence belongs to the MraZ family. In terms of assembly, forms oligomers.

Its subcellular location is the cytoplasm. The protein resides in the nucleoid. Negatively regulates its own expression and that of the subsequent genes in the proximal part of the division and cell wall (dcw) gene cluster. Acts by binding directly to DNA. May also regulate the expression of genes outside the dcw cluster. In Yersinia enterocolitica serotype O:8 / biotype 1B (strain NCTC 13174 / 8081), this protein is Transcriptional regulator MraZ.